The following is a 245-amino-acid chain: NAD(P)H-quinone oxidoreductase subunit K (245 aa).

4 residues coordinate [4Fe-4S] cluster: Cys-58, Cys-59, Cys-123, and Cys-154. Positions 210 to 245 (SDTRSAPPKELAEAIGMPIPPALLTEKAQKEEQTRG) are disordered. A compositionally biased stretch (basic and acidic residues) spans 236–245 (KAQKEEQTRG).

This sequence belongs to the complex I 20 kDa subunit family. As to quaternary structure, NDH-1 can be composed of about 15 different subunits; different subcomplexes with different compositions have been identified which probably have different functions. Requires [4Fe-4S] cluster as cofactor.

The protein resides in the cellular thylakoid membrane. It carries out the reaction a plastoquinone + NADH + (n+1) H(+)(in) = a plastoquinol + NAD(+) + n H(+)(out). The catalysed reaction is a plastoquinone + NADPH + (n+1) H(+)(in) = a plastoquinol + NADP(+) + n H(+)(out). Functionally, NDH-1 shuttles electrons from an unknown electron donor, via FMN and iron-sulfur (Fe-S) centers, to quinones in the respiratory and/or the photosynthetic chain. The immediate electron acceptor for the enzyme in this species is believed to be plastoquinone. Couples the redox reaction to proton translocation, and thus conserves the redox energy in a proton gradient. Cyanobacterial NDH-1 also plays a role in inorganic carbon-concentration. In Nostoc punctiforme (strain ATCC 29133 / PCC 73102), this protein is NAD(P)H-quinone oxidoreductase subunit K.